Here is a 500-residue protein sequence, read N- to C-terminus: Glycogen synthase (500 aa).

Lysine 15 lines the ADP-alpha-D-glucose pocket.

This sequence belongs to the glycosyltransferase 1 family. Bacterial/plant glycogen synthase subfamily.

It carries out the reaction [(1-&gt;4)-alpha-D-glucosyl](n) + ADP-alpha-D-glucose = [(1-&gt;4)-alpha-D-glucosyl](n+1) + ADP + H(+). It functions in the pathway glycan biosynthesis; glycogen biosynthesis. Synthesizes alpha-1,4-glucan chains using ADP-glucose. This chain is Glycogen synthase, found in Protochlamydia amoebophila (strain UWE25).